Reading from the N-terminus, the 1909-residue chain is DENN domain-containing protein 4C (1909 aa).

The MABP domain maps to lysine 40 to valine 199. Residues valine 191 to proline 364 enclose the uDENN domain. A cDENN domain is found at proline 385–lysine 521. The region spanning leucine 523–glycine 641 is the dDENN domain. A phosphoserine mark is found at serine 703, serine 737, and serine 741. The stretch at valine 821–alanine 855 is one PPR repeat. Residues glutamate 953, serine 965, serine 968, and serine 973 each carry the phosphoserine modification. A Phosphothreonine modification is found at threonine 975. Serine 989, serine 996, serine 1003, serine 1046, serine 1061, serine 1099, serine 1126, serine 1184, serine 1225, serine 1244, serine 1252, and serine 1278 each carry phosphoserine. Disordered stretches follow at residues lysine 1243 to serine 1263 and serine 1277 to leucine 1338. A compositionally biased stretch (polar residues) spans serine 1296–serine 1316. Phosphoserine is present on residues serine 1325, serine 1337, and serine 1346. The segment at serine 1419 to threonine 1474 is disordered. A compositionally biased stretch (low complexity) spans leucine 1426–glycine 1440. Residues lysine 1459–histidine 1468 show a composition bias toward basic and acidic residues. Phosphoserine occurs at positions 1623, 1627, 1629, 1640, and 1799.

In terms of processing, phosphorylated in response to insulin.

The protein localises to the cytoplasmic vesicle membrane. It localises to the cell membrane. Its subcellular location is the cytoplasm. It is found in the cytosol. In terms of biological role, guanine nucleotide exchange factor (GEF) activating RAB10. Promotes the exchange of GDP to GTP, converting inactive GDP-bound RAB10 into its active GTP-bound form. Thereby, stimulates SLC2A4/GLUT4 glucose transporter-enriched vesicles delivery to the plasma membrane in response to insulin. The polypeptide is DENN domain-containing protein 4C (DENND4C) (Homo sapiens (Human)).